Consider the following 349-residue polypeptide: tRNA N6-adenosine threonylcarbamoyltransferase (349 aa).

Fe cation-binding residues include H117 and H121. Substrate-binding positions include 139 to 143, D172, G185, D189, and N278; that span reads QVSGG. D310 lines the Fe cation pocket.

The protein belongs to the KAE1 / TsaD family. The cofactor is Fe(2+).

It is found in the cytoplasm. The enzyme catalyses L-threonylcarbamoyladenylate + adenosine(37) in tRNA = N(6)-L-threonylcarbamoyladenosine(37) in tRNA + AMP + H(+). Functionally, required for the formation of a threonylcarbamoyl group on adenosine at position 37 (t(6)A37) in tRNAs that read codons beginning with adenine. Is involved in the transfer of the threonylcarbamoyl moiety of threonylcarbamoyl-AMP (TC-AMP) to the N6 group of A37, together with TsaE and TsaB. TsaD likely plays a direct catalytic role in this reaction. The protein is tRNA N6-adenosine threonylcarbamoyltransferase of Lactobacillus acidophilus (strain ATCC 700396 / NCK56 / N2 / NCFM).